The following is a 143-amino-acid chain: Deoxyuridine 5'-triphosphate nucleotidohydrolase (143 aa).

S65, V78, R132, and G138 together coordinate dUMP.

This sequence belongs to the dUTPase family. As to quaternary structure, homotrimer. Requires Mg(2+) as cofactor.

The catalysed reaction is dUTP + H2O = dUMP + diphosphate + H(+). It participates in pyrimidine metabolism; dUMP biosynthesis; dUMP from dCTP (dUTP route): step 2/2. In terms of biological role, involved in nucleotide metabolism via production of dUMP, the immediate precursor of thymidine nucleotides, and decreases the intracellular concentration of dUTP so that uracil cannot be incorporated into DNA. In Antonospora locustae (Microsporidian parasite), this protein is Deoxyuridine 5'-triphosphate nucleotidohydrolase (DUT1).